We begin with the raw amino-acid sequence, 81 residues long: Fungal defensin micasin (81 aa).

The signal sequence occupies residues methionine 1–alanine 21. Positions alanine 22 to arginine 43 are excised as a propeptide. Intrachain disulfides connect cysteine 47–cysteine 68, cysteine 54–cysteine 76, and cysteine 58–cysteine 78.

Belongs to the invertebrate defensin family.

Its subcellular location is the secreted. Its function is as follows. Antibacterial peptide with potent activity against both Gram-positive and Gram-negative bacteria. May kill bacteria via an intracellular action mode to affect protein folding. Does not show effects on tested filamentous fungi or on the yeast S.cerevisiae. Does not act by destroying the membrane integrity, which is consistent with its nonamphiphilic architecture. Acts more rapidly than vancomycin, suggesting it does not act by inhibiting cell-wall biosynthesis. Does not cause hemolysis and has no cytotoxic effect on HEK cells. In vivo, is as efficient as vancomycin to protect mouse peritonitis models from S.aureus and P.aeruginosa infections. This Arthroderma otae (Microsporum canis) protein is Fungal defensin micasin.